The following is a 561-amino-acid chain: 4-coumarate--CoA ligase 1 (561 aa).

The ATP site is built by Ser210, Ser211, Gly212, Thr213, Thr214, and Lys218. Tyr260 and Ser264 together coordinate (E)-4-coumaroyl-AMP. Lys281 contacts CoA. The segment at 283–352 is SBD1; it reads EINLLLELIQ…AKFPNAKLGQ (70 aa). Residues Ala330, Gln352, Gly353, Thr357, and Met365 each contribute to the (E)-4-coumaroyl-AMP site. Gln352, Gly353, and Thr357 together coordinate ATP. Residues 353-420 are SBD2; the sequence is GYGMTEAGPV…IRGHQIMKGY (68 aa). Asp441 and Arg456 together coordinate ATP. Positions 458 and 462 each coordinate (E)-4-coumaroyl-AMP. Residues Lys464 and Gly465 each contribute to the CoA site. Lys547 is a binding site for ATP.

Belongs to the ATP-dependent AMP-binding enzyme family. It depends on Mg(2+) as a cofactor. In terms of tissue distribution, preferentially expressed in roots, bolting stems and siliques. Also detected in leaves.

The catalysed reaction is (E)-4-coumarate + ATP + CoA = (E)-4-coumaroyl-CoA + AMP + diphosphate. It carries out the reaction (E)-caffeate + ATP + CoA = (E)-caffeoyl-CoA + AMP + diphosphate. It catalyses the reaction (E)-ferulate + ATP + CoA = (E)-feruloyl-CoA + AMP + diphosphate. The enzyme catalyses (E)-4-coumarate + ATP + H(+) = (E)-4-coumaroyl-AMP + diphosphate. The catalysed reaction is (E)-4-coumaroyl-AMP + CoA = (E)-4-coumaroyl-CoA + AMP + H(+). It carries out the reaction (E)-caffeate + ATP + H(+) = (E)-caffeoyl-AMP + diphosphate. It catalyses the reaction (E)-caffeoyl-AMP + CoA = (E)-caffeoyl-CoA + AMP + H(+). The enzyme catalyses (E)-ferulate + ATP + H(+) = (E)-feruloyl-AMP + diphosphate. The catalysed reaction is (E)-feruloyl-AMP + CoA = (E)-feruloyl-CoA + AMP + H(+). Its pathway is phytoalexin biosynthesis; 3,4',5-trihydroxystilbene biosynthesis; 3,4',5-trihydroxystilbene from trans-4-coumarate: step 1/2. In terms of biological role, produces CoA thioesters of a variety of hydroxy- and methoxy-substituted cinnamic acids, which are used to synthesize several phenylpropanoid-derived compounds, including anthocyanins, flavonoids, isoflavonoids, coumarins, lignin, suberin and wall-bound phenolics. Follows a two-step reaction mechanism, wherein the carboxylate substrate first undergoes adenylation by ATP, followed by a thioesterification in the presence of CoA to yield the final CoA thioesters. This chain is 4-coumarate--CoA ligase 1, found in Arabidopsis thaliana (Mouse-ear cress).